Consider the following 461-residue polypeptide: Tubulin gamma chain (461 aa).

142 to 148 is a binding site for GTP; the sequence is AGGTGSG.

Belongs to the tubulin family.

It is found in the cytoplasm. Its subcellular location is the cytoskeleton. The protein localises to the microtubule organizing center. The protein resides in the spindle pole body. Its function is as follows. Tubulin is the major constituent of microtubules. The gamma chain is found at microtubule organizing centers (MTOC) such as the spindle poles or the centrosome, suggesting that it is involved in the minus-end nucleation of microtubule assembly. This Neurospora crassa (strain ATCC 24698 / 74-OR23-1A / CBS 708.71 / DSM 1257 / FGSC 987) protein is Tubulin gamma chain (tbg).